A 353-amino-acid chain; its full sequence is N-acetyl-gamma-glutamyl-phosphate reductase (353 aa).

Cys155 is an active-site residue.

This sequence belongs to the NAGSA dehydrogenase family. Type 1 subfamily.

It localises to the cytoplasm. The catalysed reaction is N-acetyl-L-glutamate 5-semialdehyde + phosphate + NADP(+) = N-acetyl-L-glutamyl 5-phosphate + NADPH + H(+). Its pathway is amino-acid biosynthesis; L-arginine biosynthesis; N(2)-acetyl-L-ornithine from L-glutamate: step 3/4. In terms of biological role, catalyzes the NADPH-dependent reduction of N-acetyl-5-glutamyl phosphate to yield N-acetyl-L-glutamate 5-semialdehyde. The sequence is that of N-acetyl-gamma-glutamyl-phosphate reductase from Microcystis aeruginosa (strain NIES-843 / IAM M-2473).